We begin with the raw amino-acid sequence, 274 residues long: Cytochrome b-c1 complex subunit Rieske, mitochondrial (274 aa).

The segment at 29–49 (XXXXXXXXTPEPPVLDPKRPI) is disordered. Residues 79-103 (SHTDIKVPDFSDYRRSEVLDKTKSS) lie on the Mitochondrial matrix side of the membrane. Residues 104–140 (RESSDARKVFSYMVTATTAVGVTYAAKSIVTQFISSM) traverse the membrane as a helical segment. Over 141–274 (SASADVLAMS…FLSDDMVVVG (134 aa)) the chain is Mitochondrial intermembrane. Residues 187–272 (EAAVELSQLR…YEFLSDDMVV (86 aa)) form the Rieske domain. 5 residues coordinate [2Fe-2S] cluster: Cys217, His219, Cys236, His239, and Ser241. Residues Cys222 and Cys238 are joined by a disulfide bond.

It belongs to the Rieske iron-sulfur protein family. In terms of assembly, component of the ubiquinol-cytochrome c oxidoreductase (cytochrome b-c1 complex, complex III, CIII), a multisubunit enzyme composed of 11 subunits. The complex is composed of 3 respiratory subunits cytochrome b, cytochrome c1 and Rieske protein UQCRFS1, 2 core protein subunits UQCRC1/QCR1 and UQCRC2/QCR2, and 6 low-molecular weight protein subunits UQCRH/QCR6, UQCRB/QCR7, UQCRQ/QCR8, UQCR10/QCR9, UQCR11/QCR10 and subunit 9, the cleavage product of Rieske protein UQCRFS1. The complex exists as an obligatory dimer and forms supercomplexes (SCs) in the inner mitochondrial membrane with NADH-ubiquinone oxidoreductase (complex I, CI) and cytochrome c oxidase (complex IV, CIV), resulting in different assemblies (supercomplex SCI(1)III(2)IV(1) and megacomplex MCI(2)III(2)IV(2)). Incorporation of the Rieske protein UQCRFS1 is the penultimate step in complex III assembly. Interacts with TTC19, which is involved in the clearance of UQCRFS1 fragments. Component of the ubiquinol-cytochrome c oxidoreductase (cytochrome b-c1 complex, complex III, CIII). Subunit 9 corresponds to the mitochondrial targeting sequence (MTS) of Rieske protein UQCRFS1. It is retained after processing and incorporated inside complex III, where it remains bound to the complex and localizes between the 2 core subunits UQCRC1/QCR1 and UQCRC2/QCR2. It depends on [2Fe-2S] cluster as a cofactor. In terms of processing, proteolytic processing is necessary for the correct insertion of UQCRFS1 in the complex III dimer. Several fragments are generated during UQCRFS1 insertion, most probably due to the endogenous matrix-processing peptidase (MPP) activity of the 2 core protein subunits UQCRC1/QCR1 and UQCRC2/QCR2, which are homologous to the 2 mitochondrial-processing peptidase (MPP) subunits beta-MPP and alpha-MPP respectively. The action of the protease is also necessary for the clearance of the UQCRFS1 fragments.

It is found in the mitochondrion inner membrane. It carries out the reaction a quinol + 2 Fe(III)-[cytochrome c](out) = a quinone + 2 Fe(II)-[cytochrome c](out) + 2 H(+)(out). Functionally, component of the ubiquinol-cytochrome c oxidoreductase, a multisubunit transmembrane complex that is part of the mitochondrial electron transport chain which drives oxidative phosphorylation. The respiratory chain contains 3 multisubunit complexes succinate dehydrogenase (complex II, CII), ubiquinol-cytochrome c oxidoreductase (cytochrome b-c1 complex, complex III, CIII) and cytochrome c oxidase (complex IV, CIV), that cooperate to transfer electrons derived from NADH and succinate to molecular oxygen, creating an electrochemical gradient over the inner membrane that drives transmembrane transport and the ATP synthase. The cytochrome b-c1 complex catalyzes electron transfer from ubiquinol to cytochrome c, linking this redox reaction to translocation of protons across the mitochondrial inner membrane, with protons being carried across the membrane as hydrogens on the quinol. In the process called Q cycle, 2 protons are consumed from the matrix, 4 protons are released into the intermembrane space and 2 electrons are passed to cytochrome c. The Rieske protein is a catalytic core subunit containing a [2Fe-2S] iron-sulfur cluster. It cycles between 2 conformational states during catalysis to transfer electrons from the quinol bound in the Q(0) site in cytochrome b to cytochrome c1. Incorporation of UQCRFS1 is the penultimate step in complex III assembly. Component of the ubiquinol-cytochrome c oxidoreductase (cytochrome b-c1 complex, complex III, CIII). UQCRFS1 undergoes proteolytic processing once it is incorporated in the complex III dimer. One of the fragments, called subunit 9, corresponds to its mitochondrial targeting sequence (MTS). The proteolytic processing is necessary for the correct insertion of UQCRFS1 in the complex III dimer, but the persistence of UQCRFS1-derived fragments may prevent newly imported UQCRFS1 to be processed and assembled into complex III and is detrimental for the complex III structure and function. This chain is Cytochrome b-c1 complex subunit Rieske, mitochondrial (UQCRFS1), found in Saimiri sciureus (Common squirrel monkey).